The sequence spans 397 residues: P2X purinoceptor 3 (397 aa).

Residues 1–20 (MNCISDFFTYETTKSVVVKS) are Cytoplasmic-facing. Residues 21–43 (WTIGIINRVVQLLIISYFVGWVF) traverse the membrane as a helical segment. The Extracellular segment spans residues 44–322 (LHEKAYQVRD…AGKFNIIPTI (279 aa)). Residues Lys63 and Lys65 each coordinate ATP. Intrachain disulfides connect Cys107/Cys153, Cys116/Cys137, and Cys122/Cys147. Glu111 lines the Mg(2+) pocket. Residue Asn139 is glycosylated (N-linked (GlcNAc...) asparagine). Asp158 contributes to the Mg(2+) binding site. Position 158 (Asp158) interacts with Ca(2+). Asn170 carries N-linked (GlcNAc...) asparagine glycosylation. Residue Thr172 participates in ATP binding. Residue Asn194 is glycosylated (N-linked (GlcNAc...) asparagine). 2 cysteine pairs are disulfide-bonded: Cys203/Cys213 and Cys247/Cys256. Residues Ser275, Asn279, and Arg281 each coordinate ATP. Asn290 is a glycosylation site (N-linked (GlcNAc...) asparagine). Lys299 is a binding site for ATP. Residues 323–341 (ISSVAAFTSVGVGTVLCDI) form a helical membrane-spanning segment. The Cytoplasmic segment spans residues 342–397 (ILLNFLKGADQYKAKKFEEVNETTLKIAALTNPVYPSDQTTAEKQSTDSGAFSIGH). The segment covering 378-391 (SDQTTAEKQSTDSG) has biased composition (polar residues). Residues 378 to 397 (SDQTTAEKQSTDSGAFSIGH) are disordered.

Belongs to the P2X receptor family. As to quaternary structure, homotrimer. Forms heterotrimer with P2RX2. Heterotrimeric P2RX2/3 has a ligand dose-response profile that is distinct from either homotrimeric P2RX2 or P2RX3.

It is found in the cell membrane. The enzyme catalyses Ca(2+)(in) = Ca(2+)(out). The catalysed reaction is Na(+)(in) = Na(+)(out). Has high sensitivity to ATP. Fast activation by external ATP. Exhibits rapid desensitization. Sensitives to the ATP agonist:alpha/beta-methylene-ATP. Subject to allosteric inhibition by AF-219. Mg(2+) and Ca(2+) slow deactivation of P2RX3. Extracellular ATP-activated non-selective cation channel. Plays particularly important role in sensory neurons where its activation is critical for gustatory, nociceptive responses, visceral reflexes and sensory hypersensitization. This chain is P2X purinoceptor 3 (P2RX3), found in Homo sapiens (Human).